A 308-amino-acid chain; its full sequence is Ribosomal RNA small subunit methyltransferase H (308 aa).

S-adenosyl-L-methionine contacts are provided by residues 38–40, Asp-58, Phe-82, Asp-99, and Gln-106; that span reads GGH.

Belongs to the methyltransferase superfamily. RsmH family.

The protein localises to the cytoplasm. It carries out the reaction cytidine(1402) in 16S rRNA + S-adenosyl-L-methionine = N(4)-methylcytidine(1402) in 16S rRNA + S-adenosyl-L-homocysteine + H(+). Its function is as follows. Specifically methylates the N4 position of cytidine in position 1402 (C1402) of 16S rRNA. This Acidovorax sp. (strain JS42) protein is Ribosomal RNA small subunit methyltransferase H.